Here is a 258-residue protein sequence, read N- to C-terminus: Shikimate dehydrogenase (NADP(+)) (258 aa).

Residues 14–16 and Thr-61 contribute to the shikimate site; that span reads SES. Lys-65 acts as the Proton acceptor in catalysis. Shikimate is bound by residues Asn-86 and Asp-101. Residues 125-129 and Leu-211 contribute to the NADP(+) site; that span reads GSGGS. A shikimate-binding site is contributed by Tyr-213. Residue Gly-234 participates in NADP(+) binding.

This sequence belongs to the shikimate dehydrogenase family. Homodimer.

It carries out the reaction shikimate + NADP(+) = 3-dehydroshikimate + NADPH + H(+). It functions in the pathway metabolic intermediate biosynthesis; chorismate biosynthesis; chorismate from D-erythrose 4-phosphate and phosphoenolpyruvate: step 4/7. In terms of biological role, involved in the biosynthesis of the chorismate, which leads to the biosynthesis of aromatic amino acids. Catalyzes the reversible NADPH linked reduction of 3-dehydroshikimate (DHSA) to yield shikimate (SA). The sequence is that of Shikimate dehydrogenase (NADP(+)) from Clostridium botulinum (strain Loch Maree / Type A3).